Here is a 458-residue protein sequence, read N- to C-terminus: Dihydrolipoyl dehydrogenase (458 aa).

Residues 30-38 (DKGKLGGTC), Lys-47, and Ala-112 contribute to the FAD site. Cysteines 38 and 43 form a disulfide. Residues 177–181 (GGGVI), Glu-200, and 263–266 (AIGR) each bind NAD(+). Residues Asp-305 and Ala-313 each coordinate FAD. The active-site Proton acceptor is the His-437.

Belongs to the class-I pyridine nucleotide-disulfide oxidoreductase family. Homodimer. The cofactor is FAD.

The protein localises to the cytoplasm. It catalyses the reaction N(6)-[(R)-dihydrolipoyl]-L-lysyl-[protein] + NAD(+) = N(6)-[(R)-lipoyl]-L-lysyl-[protein] + NADH + H(+). The protein operates within ketone degradation; acetoin degradation. The sequence is that of Dihydrolipoyl dehydrogenase (acoL) from Bacillus subtilis (strain 168).